The chain runs to 139 residues: Translation initiation factor 2 subunit beta (139 aa).

This sequence belongs to the eIF-2-beta/eIF-5 family. As to quaternary structure, heterotrimer composed of an alpha, a beta and a gamma chain.

Its function is as follows. eIF-2 functions in the early steps of protein synthesis by forming a ternary complex with GTP and initiator tRNA. This is Translation initiation factor 2 subunit beta from Saccharolobus solfataricus (strain ATCC 35092 / DSM 1617 / JCM 11322 / P2) (Sulfolobus solfataricus).